The chain runs to 637 residues: Chaperone protein HtpG (637 aa).

Positions 1–347 (MTQSVHAETH…SNDLPLNVSR (347 aa)) are a; substrate-binding. The tract at residues 348–564 (EILQDNKVTV…NHGMSTQMIK (217 aa)) is b. The interval 565–637 (LMRAAGQPVP…SRINRLLLQA (73 aa)) is c.

This sequence belongs to the heat shock protein 90 family. As to quaternary structure, homodimer.

The protein localises to the cytoplasm. In terms of biological role, molecular chaperone. Has ATPase activity. This Aeromonas salmonicida (strain A449) protein is Chaperone protein HtpG.